The primary structure comprises 254 residues: 5'/3'-nucleotidase SurE (254 aa).

A divalent metal cation-binding residues include D8, D9, S39, and N92.

The protein belongs to the SurE nucleotidase family. A divalent metal cation serves as cofactor.

It localises to the cytoplasm. The enzyme catalyses a ribonucleoside 5'-phosphate + H2O = a ribonucleoside + phosphate. It carries out the reaction a ribonucleoside 3'-phosphate + H2O = a ribonucleoside + phosphate. The catalysed reaction is [phosphate](n) + H2O = [phosphate](n-1) + phosphate + H(+). In terms of biological role, nucleotidase with a broad substrate specificity as it can dephosphorylate various ribo- and deoxyribonucleoside 5'-monophosphates and ribonucleoside 3'-monophosphates with highest affinity to 3'-AMP. Also hydrolyzes polyphosphate (exopolyphosphatase activity) with the preference for short-chain-length substrates (P20-25). Might be involved in the regulation of dNTP and NTP pools, and in the turnover of 3'-mononucleotides produced by numerous intracellular RNases (T1, T2, and F) during the degradation of various RNAs. This chain is 5'/3'-nucleotidase SurE, found in Edwardsiella ictaluri (strain 93-146).